A 23-amino-acid polypeptide reads, in one-letter code: Basic phospholipase A2 CB2 (23 aa).

Ca(2+) serves as cofactor. Post-translationally, contains 7 disulfide bonds. Expressed by the venom gland.

Its subcellular location is the secreted. The enzyme catalyses a 1,2-diacyl-sn-glycero-3-phosphocholine + H2O = a 1-acyl-sn-glycero-3-phosphocholine + a fatty acid + H(+). Its function is as follows. Snake venom phospholipase A2 (PLA2) that shows presynaptic neurotoxicity. PLA2 catalyzes the calcium-dependent hydrolysis of the 2-acyl groups in 3-sn-phosphoglycerides. The polypeptide is Basic phospholipase A2 CB2 (Crotalus durissus cumanensis (South American rattlesnake)).